The sequence spans 145 residues: D-aminoacyl-tRNA deacylase (145 aa).

Positions 137–138 match the Gly-cisPro motif, important for rejection of L-amino acids motif; that stretch reads GP.

Belongs to the DTD family. In terms of assembly, homodimer.

The protein resides in the cytoplasm. It carries out the reaction glycyl-tRNA(Ala) + H2O = tRNA(Ala) + glycine + H(+). It catalyses the reaction a D-aminoacyl-tRNA + H2O = a tRNA + a D-alpha-amino acid + H(+). Its function is as follows. An aminoacyl-tRNA editing enzyme that deacylates mischarged D-aminoacyl-tRNAs. Also deacylates mischarged glycyl-tRNA(Ala), protecting cells against glycine mischarging by AlaRS. Acts via tRNA-based rather than protein-based catalysis; rejects L-amino acids rather than detecting D-amino acids in the active site. By recycling D-aminoacyl-tRNA to D-amino acids and free tRNA molecules, this enzyme counteracts the toxicity associated with the formation of D-aminoacyl-tRNA entities in vivo and helps enforce protein L-homochirality. The chain is D-aminoacyl-tRNA deacylase from Legionella pneumophila (strain Lens).